Consider the following 497-residue polypeptide: Cytosol aminopeptidase (497 aa).

2 residues coordinate Mn(2+): Lys267 and Asp272. The active site involves Lys279. Asp290, Asp349, and Glu351 together coordinate Mn(2+). Residue Arg353 is part of the active site.

Belongs to the peptidase M17 family. Mn(2+) is required as a cofactor.

Its subcellular location is the cytoplasm. The enzyme catalyses Release of an N-terminal amino acid, Xaa-|-Yaa-, in which Xaa is preferably Leu, but may be other amino acids including Pro although not Arg or Lys, and Yaa may be Pro. Amino acid amides and methyl esters are also readily hydrolyzed, but rates on arylamides are exceedingly low.. The catalysed reaction is Release of an N-terminal amino acid, preferentially leucine, but not glutamic or aspartic acids.. Presumably involved in the processing and regular turnover of intracellular proteins. Catalyzes the removal of unsubstituted N-terminal amino acids from various peptides. This chain is Cytosol aminopeptidase (pepA), found in Pseudomonas putida (Arthrobacter siderocapsulatus).